A 274-amino-acid polypeptide reads, in one-letter code: Diaminopimelate epimerase (274 aa).

Substrate is bound by residues Asn11, Gln44, and Asn64. Cys73 serves as the catalytic Proton donor. Substrate-binding positions include 74 to 75, Asn157, Asn190, and 208 to 209; these read GN and ER. Cys217 serves as the catalytic Proton acceptor. Residue 218 to 219 coordinates substrate; the sequence is GS.

It belongs to the diaminopimelate epimerase family. As to quaternary structure, homodimer.

It localises to the cytoplasm. It catalyses the reaction (2S,6S)-2,6-diaminopimelate = meso-2,6-diaminopimelate. Its pathway is amino-acid biosynthesis; L-lysine biosynthesis via DAP pathway; DL-2,6-diaminopimelate from LL-2,6-diaminopimelate: step 1/1. In terms of biological role, catalyzes the stereoinversion of LL-2,6-diaminopimelate (L,L-DAP) to meso-diaminopimelate (meso-DAP), a precursor of L-lysine and an essential component of the bacterial peptidoglycan. In Shigella flexneri serotype 5b (strain 8401), this protein is Diaminopimelate epimerase.